Reading from the N-terminus, the 499-residue chain is uncharacterized protein (499 aa).

The segment at 10 to 57 adopts an RING-type; degenerate zinc-finger fold; it reads CGICGQEYSEDEKLLIPRILTECGHTICTGCAGKIKGQSSIIACPFDR. The B box-type; degenerate zinc finger occupies 101–147; the sequence is NKNGVCDENTNHHASNYCETCDADLCEECWTWIHSISTLAHHEKKMI.

This is an uncharacterized protein from Caenorhabditis elegans.